The chain runs to 180 residues: MAKRVYAIAMRYAQALHELAKEQKSLDKWQEDLQNLSRLTEDASVDEFLSNPKIVSARKHAVLAKLSDIDPLMLNLVDMLVATRRLGIMRAISGEYNRLLNEARGVEDAIVTTAKPASEADTEIIRQQLSKITGKKINILTATDPGLIAGLKARIGDKLIDGSISRRLVLLQNEISQGRI.

This sequence belongs to the ATPase delta chain family. F-type ATPases have 2 components, F(1) - the catalytic core - and F(0) - the membrane proton channel. F(1) has five subunits: alpha(3), beta(3), gamma(1), delta(1), epsilon(1). F(0) has three main subunits: a(1), b(2) and c(10-14). The alpha and beta chains form an alternating ring which encloses part of the gamma chain. F(1) is attached to F(0) by a central stalk formed by the gamma and epsilon chains, while a peripheral stalk is formed by the delta and b chains.

The protein localises to the cell membrane. F(1)F(0) ATP synthase produces ATP from ADP in the presence of a proton or sodium gradient. F-type ATPases consist of two structural domains, F(1) containing the extramembraneous catalytic core and F(0) containing the membrane proton channel, linked together by a central stalk and a peripheral stalk. During catalysis, ATP synthesis in the catalytic domain of F(1) is coupled via a rotary mechanism of the central stalk subunits to proton translocation. Functionally, this protein is part of the stalk that links CF(0) to CF(1). It either transmits conformational changes from CF(0) to CF(1) or is implicated in proton conduction. This chain is ATP synthase subunit delta, found in Dehalococcoides mccartyi (strain ATCC BAA-2100 / JCM 16839 / KCTC 5957 / BAV1).